Reading from the N-terminus, the 221-residue chain is Guanylate kinase (221 aa).

Residues 18–196 (GFLFILSSPS…SASLIKSIYL (179 aa)) form the Guanylate kinase-like domain. 25 to 32 (SPSGAGKS) serves as a coordination point for ATP.

This sequence belongs to the guanylate kinase family.

It is found in the cytoplasm. The enzyme catalyses GMP + ATP = GDP + ADP. Its function is as follows. Essential for recycling GMP and indirectly, cGMP. The chain is Guanylate kinase from Bartonella quintana (strain Toulouse) (Rochalimaea quintana).